The chain runs to 272 residues: Protein STAY-GREEN 1, chloroplastic (272 aa).

The transit peptide at 1–50 (MGTLTTSLVVPSKLNNEQQSSIFIHKTRRKCKKNQSIVPVARLFGPAIFE) directs the protein to the chloroplast. Residues 201–222 (TSPSSSSGGVGGVKSTSFTSNS) are disordered.

It belongs to the staygreen family. In terms of assembly, interacts with PSY1.

The protein localises to the plastid. The protein resides in the chloroplast. In terms of biological role, required to trigger chlorophyll degradation during leaf senescence and fruit ripening. Binds directly PSY1 to regulate the accumulation of lycopene and beta-carotene in the maturing fruits. This chain is Protein STAY-GREEN 1, chloroplastic, found in Solanum lycopersicum (Tomato).